A 266-amino-acid chain; its full sequence is Nuclease (266 aa).

The first 21 residues, Met-1–Ala-21, serve as a signal peptide directing secretion. Residues Cys-30 and Cys-34 are joined by a disulfide bond. The Proton acceptor role is filled by His-110. Position 140 (Asn-140) interacts with Mg(2+). A disulfide bridge connects residues Cys-222 and Cys-264.

This sequence belongs to the DNA/RNA non-specific endonuclease family. In terms of assembly, homodimer. The cofactor is Mg(2+).

It is found in the secreted. The enzyme catalyses Endonucleolytic cleavage to 5'-phosphomononucleotide and 5'-phosphooligonucleotide end-products.. Catalyzes the hydrolysis of both DNA and RNA, double- or single-stranded, at the 3'position of the phosphodiester bond to produce 5'-phosphorylated mono-, di-, tri- and tetranucleotides. DNA is a slightly better substrate than RNA. This Serratia marcescens protein is Nuclease (nucA).